Here is a 311-residue protein sequence, read N- to C-terminus: Transcriptional regulatory protein MoaR1 (311 aa).

A DNA-binding region (ompR/PhoB-type) is located at residues 15–117; that stretch reads LNATTAGAVQ…SEPPGYRLLI (103 aa).

This sequence belongs to the AfsR/DnrI/RedD regulatory family.

Its function is as follows. Acts as a positive transcriptional regulator of the molybdopterin biosynthesis moa1 locus, promoting the expression of the moaA1B1C1D1 genes. Binds directly to the moaA1 promoter. This is Transcriptional regulatory protein MoaR1 (moaR1) from Mycobacterium tuberculosis (strain ATCC 25618 / H37Rv).